The sequence spans 96 residues: Co-chaperonin GroES (96 aa).

Belongs to the GroES chaperonin family. Heptamer of 7 subunits arranged in a ring. Interacts with the chaperonin GroEL.

The protein resides in the cytoplasm. Functionally, together with the chaperonin GroEL, plays an essential role in assisting protein folding. The GroEL-GroES system forms a nano-cage that allows encapsulation of the non-native substrate proteins and provides a physical environment optimized to promote and accelerate protein folding. GroES binds to the apical surface of the GroEL ring, thereby capping the opening of the GroEL channel. The sequence is that of Co-chaperonin GroES from Hydrogenovibrio crunogenus (strain DSM 25203 / XCL-2) (Thiomicrospira crunogena).